The following is a 151-amino-acid chain: UPF0208 membrane protein YfbV (151 aa).

2 helical membrane passes run Tyr-46–Leu-65 and Leu-69–Gly-91.

This sequence belongs to the UPF0208 family.

The protein resides in the cell inner membrane. In Escherichia coli O1:K1 / APEC, this protein is UPF0208 membrane protein YfbV.